The following is a 767-amino-acid chain: uncharacterized protein (767 aa).

Disordered regions lie at residues 171–209, 314–340, and 533–566; these read LPVW…LRTP, ETEA…CQEE, and RDHG…PRGF. 2 stretches are compositionally biased toward basic and acidic residues: residues 322–331 and 552–564; these read PDPRPEKDAK and ETKD…RDPR.

This is an uncharacterized protein from Homo sapiens (Human).